We begin with the raw amino-acid sequence, 376 residues long: UPF0284 protein glr4139 (376 aa).

This sequence belongs to the UPF0284 family.

This is UPF0284 protein glr4139 from Gloeobacter violaceus (strain ATCC 29082 / PCC 7421).